The chain runs to 311 residues: Ribose-phosphate pyrophosphokinase (311 aa).

ATP contacts are provided by residues 34–36 (DQE) and 93–94 (RQ). Positions 127 and 168 each coordinate Mg(2+). Lys191 is a catalytic residue. Residues Arg193, Asp217, and 221-225 (DSGGT) each bind D-ribose 5-phosphate.

It belongs to the ribose-phosphate pyrophosphokinase family. Class I subfamily. As to quaternary structure, homohexamer. The cofactor is Mg(2+).

The protein localises to the cytoplasm. It catalyses the reaction D-ribose 5-phosphate + ATP = 5-phospho-alpha-D-ribose 1-diphosphate + AMP + H(+). It functions in the pathway metabolic intermediate biosynthesis; 5-phospho-alpha-D-ribose 1-diphosphate biosynthesis; 5-phospho-alpha-D-ribose 1-diphosphate from D-ribose 5-phosphate (route I): step 1/1. Involved in the biosynthesis of the central metabolite phospho-alpha-D-ribosyl-1-pyrophosphate (PRPP) via the transfer of pyrophosphoryl group from ATP to 1-hydroxyl of ribose-5-phosphate (Rib-5-P). The polypeptide is Ribose-phosphate pyrophosphokinase (Mesorhizobium japonicum (strain LMG 29417 / CECT 9101 / MAFF 303099) (Mesorhizobium loti (strain MAFF 303099))).